The chain runs to 117 residues: Ribosomal silencing factor RsfS (117 aa).

Belongs to the Iojap/RsfS family. As to quaternary structure, interacts with ribosomal protein uL14 (rplN).

Its subcellular location is the cytoplasm. Its function is as follows. Functions as a ribosomal silencing factor. Interacts with ribosomal protein uL14 (rplN), blocking formation of intersubunit bridge B8. Prevents association of the 30S and 50S ribosomal subunits and the formation of functional ribosomes, thus repressing translation. The polypeptide is Ribosomal silencing factor RsfS (Halalkalibacterium halodurans (strain ATCC BAA-125 / DSM 18197 / FERM 7344 / JCM 9153 / C-125) (Bacillus halodurans)).